Consider the following 180-residue polypeptide: Adenine phosphoribosyltransferase (180 aa).

The protein belongs to the purine/pyrimidine phosphoribosyltransferase family. Homodimer.

It localises to the cytoplasm. It catalyses the reaction AMP + diphosphate = 5-phospho-alpha-D-ribose 1-diphosphate + adenine. It functions in the pathway purine metabolism; AMP biosynthesis via salvage pathway; AMP from adenine: step 1/1. Its function is as follows. Catalyzes a salvage reaction resulting in the formation of AMP, that is energically less costly than de novo synthesis. This is Adenine phosphoribosyltransferase from Sinorhizobium medicae (strain WSM419) (Ensifer medicae).